The sequence spans 151 residues: UPF0178 protein GSU0171 (151 aa).

It belongs to the UPF0178 family.

The chain is UPF0178 protein GSU0171 from Geobacter sulfurreducens (strain ATCC 51573 / DSM 12127 / PCA).